Here is a 262-residue protein sequence, read N- to C-terminus: Nurim (262 aa).

Over 1–4 (MAPA) the chain is Nuclear. The chain crosses the membrane as a helical span at residues 5-28 (LLLVPAALASFILAFGTGVEFVRF). At 29–58 (TSLRPLLGGIPESGGPDARHGWLAALQDRS) the chain is on the perinuclear space side. The helical transmembrane segment at 59–80 (ILASLAWDLCLLLLFVVQHSLM) threads the bilayer. Residues 81–97 (ATEAVKAWTSRYFGVLQ) are Nuclear-facing. A helical transmembrane segment spans residues 98–114 (RSLYVACTALALQLVMR). Over 115-133 (YWETTPRGPVLWEARAEPW) the chain is Perinuclear space. The helical transmembrane segment at 134-164 (ATWVPLLCFVLHVVSWLLIFSILLVFDYAEL) threads the bilayer. Topologically, residues 165 to 191 (MGLKQVYYHVLGLGEPLSLKSPRALRL) are nuclear. The chain crosses the membrane as a helical span at residues 192–210 (FSHLRHPVCVELLTVLWVV). Topologically, residues 211–216 (PTLGTD) are perinuclear space. The helical transmembrane segment at 217–234 (RLLLALLFTLYLGLAHGL) threads the bilayer. Topologically, residues 235 to 262 (DQQDLRYLRSQLQRKLHLLSRPQDGEAE) are nuclear.

This sequence belongs to the nurim family.

The protein localises to the nucleus inner membrane. This Mus musculus (Mouse) protein is Nurim (Nrm).